A 212-amino-acid polypeptide reads, in one-letter code: ATP phosphoribosyltransferase (212 aa).

The protein belongs to the ATP phosphoribosyltransferase family. Short subfamily. As to quaternary structure, heteromultimer composed of HisG and HisZ subunits.

Its subcellular location is the cytoplasm. It catalyses the reaction 1-(5-phospho-beta-D-ribosyl)-ATP + diphosphate = 5-phospho-alpha-D-ribose 1-diphosphate + ATP. It functions in the pathway amino-acid biosynthesis; L-histidine biosynthesis; L-histidine from 5-phospho-alpha-D-ribose 1-diphosphate: step 1/9. Its function is as follows. Catalyzes the condensation of ATP and 5-phosphoribose 1-diphosphate to form N'-(5'-phosphoribosyl)-ATP (PR-ATP). Has a crucial role in the pathway because the rate of histidine biosynthesis seems to be controlled primarily by regulation of HisG enzymatic activity. This is ATP phosphoribosyltransferase from Citrifermentans bemidjiense (strain ATCC BAA-1014 / DSM 16622 / JCM 12645 / Bem) (Geobacter bemidjiensis).